The sequence spans 64 residues: Large ribosomal subunit protein uL29 (64 aa).

The protein belongs to the universal ribosomal protein uL29 family.

This chain is Large ribosomal subunit protein uL29, found in Cupriavidus necator (strain ATCC 17699 / DSM 428 / KCTC 22496 / NCIMB 10442 / H16 / Stanier 337) (Ralstonia eutropha).